The following is an 85-amino-acid chain: Toxin 3FTx-Lei1 (85 aa).

A signal peptide spans 1 to 21 (MKTLLLSLVVVTFVCLDLAHT). 5 cysteine pairs are disulfide-bonded: C24–C45, C27–C32, C38–C63, C67–C78, and C79–C84.

The protein belongs to the three-finger toxin family. Ancestral subfamily. In terms of tissue distribution, expressed by the venom gland.

It is found in the secreted. This is Toxin 3FTx-Lei1 from Leioheterodon madagascariensis (Malagasy giant hognose snake).